Consider the following 352-residue polypeptide: Fe(3+) ions import ATP-binding protein FbpC (352 aa).

The 235-residue stretch at 5-239 folds into the ABC transporter domain; it reads LHIGHLSKSF…PADLDAALFI (235 aa). An ATP-binding site is contributed by 37–44; the sequence is GASGCGKT.

Belongs to the ABC transporter superfamily. Fe(3+) ion importer (TC 3.A.1.10) family. In terms of assembly, the complex is composed of two ATP-binding proteins (FbpC), two transmembrane proteins (FbpB) and a solute-binding protein (FbpA).

Its subcellular location is the cell inner membrane. It catalyses the reaction Fe(3+)(out) + ATP + H2O = Fe(3+)(in) + ADP + phosphate + H(+). Its function is as follows. Part of the ABC transporter complex FbpABC involved in Fe(3+) ions import. Responsible for energy coupling to the transport system. The sequence is that of Fe(3+) ions import ATP-binding protein FbpC from Neisseria meningitidis serogroup A / serotype 4A (strain DSM 15465 / Z2491).